A 167-amino-acid chain; its full sequence is SsrA-binding protein (167 aa).

Residues 139-158 (QNHDKRDAAKERDWQRDKQR) are compositionally biased toward basic and acidic residues. The tract at residues 139–167 (QNHDKRDAAKERDWQRDKQRVMRRHNRDA) is disordered.

The protein belongs to the SmpB family.

It localises to the cytoplasm. In terms of biological role, required for rescue of stalled ribosomes mediated by trans-translation. Binds to transfer-messenger RNA (tmRNA), required for stable association of tmRNA with ribosomes. tmRNA and SmpB together mimic tRNA shape, replacing the anticodon stem-loop with SmpB. tmRNA is encoded by the ssrA gene; the 2 termini fold to resemble tRNA(Ala) and it encodes a 'tag peptide', a short internal open reading frame. During trans-translation Ala-aminoacylated tmRNA acts like a tRNA, entering the A-site of stalled ribosomes, displacing the stalled mRNA. The ribosome then switches to translate the ORF on the tmRNA; the nascent peptide is terminated with the 'tag peptide' encoded by the tmRNA and targeted for degradation. The ribosome is freed to recommence translation, which seems to be the essential function of trans-translation. In Xanthomonas oryzae pv. oryzae (strain PXO99A), this protein is SsrA-binding protein.